We begin with the raw amino-acid sequence, 360 residues long: Magnesium transporter NIPA2 (360 aa).

Over methionine 1 to aspartate 9 the chain is Extracellular. The helical transmembrane segment at phenylalanine 10–leucine 30 threads the bilayer. Residues lysine 31–glutamate 56 are Cytoplasmic-facing. The chain crosses the membrane as a helical span at residues tryptophan 57–tyrosine 77. A topological domain (extracellular) is located at residue alanine 78. A helical membrane pass occupies residues phenylalanine 79 to leucine 99. Over serine 100–arginine 107 the chain is Cytoplasmic. A helical transmembrane segment spans residues leucine 108 to isoleucine 128. The Extracellular portion of the chain corresponds to histidine 129 to proline 149. Residues glycine 150–glycine 170 traverse the membrane as a helical segment. At proline 171–glutamine 175 the chain is on the cytoplasmic side. Residues threonine 176 to valine 196 traverse the membrane as a helical segment. The Extracellular portion of the chain corresponds to lysine 197–histidine 215. The chain crosses the membrane as a helical span at residues proline 216–leucine 236. Residues asparagine 237–serine 246 are Cytoplasmic-facing. Residues isoleucine 247 to leucine 267 traverse the membrane as a helical segment. Residues phenylalanine 268–aspartate 278 are Extracellular-facing. Residues valine 279 to phenylalanine 299 form a helical membrane-spanning segment. Over lysine 300–phenylalanine 360 the chain is Cytoplasmic.

It belongs to the NIPA family. As to expression, widely expressed.

It is found in the cell membrane. It localises to the early endosome. The catalysed reaction is Mg(2+)(in) = Mg(2+)(out). In terms of biological role, acts as a selective Mg(2+) transporter. The sequence is that of Magnesium transporter NIPA2 (NIPA2) from Homo sapiens (Human).